The following is a 267-amino-acid chain: Orotidine 5'-phosphate decarboxylase (267 aa).

Substrate contacts are provided by residues D40, 62–64 (KTH), 93–102 (DRKFADIGNT), Y215, and R234. K95 functions as the Proton donor in the catalytic mechanism.

The protein belongs to the OMP decarboxylase family.

It catalyses the reaction orotidine 5'-phosphate + H(+) = UMP + CO2. It functions in the pathway pyrimidine metabolism; UMP biosynthesis via de novo pathway; UMP from orotate: step 2/2. This Phycomyces blakesleeanus (strain ATCC 8743b / DSM 1359 / FGSC 10004 / NBRC 33097 / NRRL 1555) protein is Orotidine 5'-phosphate decarboxylase (pyrG).